Consider the following 1518-residue polypeptide: Putative cellulose synthase 2 (1518 aa).

The interval 1–731 is catalytic; that stretch reads MYGTWFTTGK…EEKLEKQSFV (731 aa). 3 helical membrane-spanning segments follow: residues 24–44, 71–91, and 105–125; these read PVWV…SVRI, ITVF…VWRL, and LAVL…LSYF. The tract at residues 144-237 is catalytic subdomain A; sequence QWPSVDVFVP…FAVIFDCDHV (94 aa). The active site involves Asp-186. The substrate site is built by Asp-233 and Asp-235. The segment at 314–374 is catalytic subdomain B; it reads EAVMGIGGFA…GQRVRWARGM (61 aa). Asp-330 is an active-site residue. Helical transmembrane passes span 404–424, 427–447, 465–485, 514–534, and 543–563; these read FLFA…LFLG, IIAA…FHSV, IYET…LLQP, ILAG…VWQF, and FILN…SIAV. Residues 569 to 668 enclose the PilZ domain; the sequence is QTRNAPRVSV…ERQVVSMVFG (100 aa). The tract at residues 732 to 1518 is cyclic di-GMP binding domain; that stretch reads LKPVPRSARH…IARDDLTGEL (787 aa). The disordered stretch occupies residues 765–785; sequence APSPDQSGVTAETPFGDSNTG. Residues 768–785 show a composition bias toward polar residues; the sequence is PDQSGVTAETPFGDSNTG. The chain crosses the membrane as a helical span at residues 1481–1501; that stretch reads ALYLAGLAGAGLAALGVWAWL.

It in the N-terminal section; belongs to the glycosyltransferase 2 family. The protein in the C-terminal section; belongs to the AcsB/BcsB family.

The protein localises to the cell inner membrane. The catalysed reaction is [(1-&gt;4)-beta-D-glucosyl](n) + UDP-alpha-D-glucose = [(1-&gt;4)-beta-D-glucosyl](n+1) + UDP + H(+). It participates in glycan metabolism; bacterial cellulose biosynthesis. The polypeptide is Putative cellulose synthase 2 (bcsABII-A) (Komagataeibacter xylinus (Gluconacetobacter xylinus)).